The sequence spans 173 residues: ATP synthase subunit b (173 aa).

Residues 18 to 38 (IFWSLVILIIVAVFFYKFFLP) form a helical membrane-spanning segment.

This sequence belongs to the ATPase B chain family. As to quaternary structure, F-type ATPases have 2 components, F(1) - the catalytic core - and F(0) - the membrane proton channel. F(1) has five subunits: alpha(3), beta(3), gamma(1), delta(1), epsilon(1). F(0) has three main subunits: a(1), b(2) and c(10-14). The alpha and beta chains form an alternating ring which encloses part of the gamma chain. F(1) is attached to F(0) by a central stalk formed by the gamma and epsilon chains, while a peripheral stalk is formed by the delta and b chains.

Its subcellular location is the cell membrane. F(1)F(0) ATP synthase produces ATP from ADP in the presence of a proton or sodium gradient. F-type ATPases consist of two structural domains, F(1) containing the extramembraneous catalytic core and F(0) containing the membrane proton channel, linked together by a central stalk and a peripheral stalk. During catalysis, ATP synthesis in the catalytic domain of F(1) is coupled via a rotary mechanism of the central stalk subunits to proton translocation. Its function is as follows. Component of the F(0) channel, it forms part of the peripheral stalk, linking F(1) to F(0). This chain is ATP synthase subunit b, found in Bifidobacterium adolescentis (strain ATCC 15703 / DSM 20083 / NCTC 11814 / E194a).